The chain runs to 180 residues: Stathmin-3 (180 aa).

S-palmitoyl cysteine attachment occurs at residues Cys22 and Cys24. Residues 38–180 (GDMEVKQLDK…NKEQREEMSG (143 aa)) enclose the SLD domain. 7 positions are modified to phosphoserine: Ser50, Ser60, Ser65, Ser68, Ser72, Ser73, and Ser81. The disordered stretch occupies residues 59–82 (KSPSDLSPESPMLSSPPKKKDTSL). The segment covering 60-74 (SPSDLSPESPMLSSP) has biased composition (low complexity). Residues 75-179 (PKKKDTSLEE…RNKEQREEMS (105 aa)) adopt a coiled-coil conformation.

This sequence belongs to the stathmin family. In terms of assembly, interacts with STAT3. Interacts with CLU (secreted form); this interaction may act as an important modulator during neuronal differentiation. Post-translationally, N-terminal palmitoylation promotes specific anchoring to the cytosolic leaflet of Golgi membranes and subsequent vesicular trafficking along dendrites and axons. Neuronal Stathmins are substrates for palmitoyltransferases ZDHHC3, ZDHHC7 and ZDHHC15. Neuron specific.

The protein localises to the golgi apparatus. It is found in the cell projection. The protein resides in the growth cone. Its subcellular location is the axon. It localises to the cytoplasm. The protein localises to the cytosol. Exhibits microtubule-destabilizing activity, which is antagonized by STAT3. The polypeptide is Stathmin-3 (STMN3) (Homo sapiens (Human)).